A 102-amino-acid polypeptide reads, in one-letter code: Small ribosomal subunit protein uS10 (102 aa).

This sequence belongs to the universal ribosomal protein uS10 family. As to quaternary structure, part of the 30S ribosomal subunit.

Its function is as follows. Involved in the binding of tRNA to the ribosomes. The chain is Small ribosomal subunit protein uS10 from Rhizobium meliloti (strain 1021) (Ensifer meliloti).